We begin with the raw amino-acid sequence, 248 residues long: UPF0246 protein RF_0769 (248 aa).

This sequence belongs to the UPF0246 family.

The polypeptide is UPF0246 protein RF_0769 (Rickettsia felis (strain ATCC VR-1525 / URRWXCal2) (Rickettsia azadi)).